The sequence spans 250 residues: Putative apoptosis inhibitor ORF99 (250 aa).

The BIR repeat unit spans residues 13–78 (RVNSFGGWSK…KFSGDCLYLK (66 aa)).

Its function is as follows. May act as an apoptosis inhibitor. This chain is Putative apoptosis inhibitor ORF99, found in Ostreid herpesvirus 1 (isolate France) (OsHV-1).